The chain runs to 197 residues: Holliday junction branch migration complex subunit RuvA (197 aa).

The domain I stretch occupies residues 1 to 63 (MYAYLKGIIT…EDAHLLYGFR (63 aa)). Positions 64 to 142 (SEDEKKLFLS…VAGDGLPAKV (79 aa)) are domain II. The flexible linker stretch occupies residues 143 to 147 (AVQAS). The segment at 148–197 (AENQELEEAMEAMLALGYKATELKKIKKFFEGTTDTAENYIKSALKMLVK) is domain III.

The protein belongs to the RuvA family. As to quaternary structure, homotetramer. Forms an RuvA(8)-RuvB(12)-Holliday junction (HJ) complex. HJ DNA is sandwiched between 2 RuvA tetramers; dsDNA enters through RuvA and exits via RuvB. An RuvB hexamer assembles on each DNA strand where it exits the tetramer. Each RuvB hexamer is contacted by two RuvA subunits (via domain III) on 2 adjacent RuvB subunits; this complex drives branch migration. In the full resolvosome a probable DNA-RuvA(4)-RuvB(12)-RuvC(2) complex forms which resolves the HJ.

Its subcellular location is the cytoplasm. The RuvA-RuvB-RuvC complex processes Holliday junction (HJ) DNA during genetic recombination and DNA repair, while the RuvA-RuvB complex plays an important role in the rescue of blocked DNA replication forks via replication fork reversal (RFR). RuvA specifically binds to HJ cruciform DNA, conferring on it an open structure. The RuvB hexamer acts as an ATP-dependent pump, pulling dsDNA into and through the RuvAB complex. HJ branch migration allows RuvC to scan DNA until it finds its consensus sequence, where it cleaves and resolves the cruciform DNA. This is Holliday junction branch migration complex subunit RuvA from Streptococcus pneumoniae serotype 2 (strain D39 / NCTC 7466).